The following is a 475-amino-acid chain: Ribulose bisphosphate carboxylase large chain (475 aa).

Positions 1–2 (MS) are excised as a propeptide. Pro-3 is modified (N-acetylproline). At Lys-14 the chain carries N6,N6,N6-trimethyllysine. Residues Asn-123 and Thr-173 each coordinate substrate. Lys-175 (proton acceptor) is an active-site residue. Lys-177 serves as a coordination point for substrate. Lys-201, Asp-203, and Glu-204 together coordinate Mg(2+). The residue at position 201 (Lys-201) is an N6-carboxylysine. The active-site Proton acceptor is His-294. The substrate site is built by Arg-295, His-327, and Ser-379.

This sequence belongs to the RuBisCO large chain family. Type I subfamily. As to quaternary structure, heterohexadecamer of 8 large chains and 8 small chains; disulfide-linked. The disulfide link is formed within the large subunit homodimers. It depends on Mg(2+) as a cofactor. In terms of processing, the disulfide bond which can form in the large chain dimeric partners within the hexadecamer appears to be associated with oxidative stress and protein turnover.

It is found in the plastid. The protein localises to the chloroplast. The catalysed reaction is 2 (2R)-3-phosphoglycerate + 2 H(+) = D-ribulose 1,5-bisphosphate + CO2 + H2O. It catalyses the reaction D-ribulose 1,5-bisphosphate + O2 = 2-phosphoglycolate + (2R)-3-phosphoglycerate + 2 H(+). Its function is as follows. RuBisCO catalyzes two reactions: the carboxylation of D-ribulose 1,5-bisphosphate, the primary event in carbon dioxide fixation, as well as the oxidative fragmentation of the pentose substrate in the photorespiration process. Both reactions occur simultaneously and in competition at the same active site. This Cycas taitungensis (Prince sago) protein is Ribulose bisphosphate carboxylase large chain.